A 374-amino-acid chain; its full sequence is Copper-containing nitrite reductase (374 aa).

Positions 1 to 31 (MFTRRAALVGAAALASAPLVIRTAGAEEAPA) form a signal peptide, tat-type signal. 2 Plastocyanin-like domains span residues 93–189 (MTFD…IMVL) and 254–355 (GAVG…VLVE). His126, His131, His166, Cys167, His177, Met182, and His338 together coordinate Cu cation.

This sequence belongs to the multicopper oxidase family. Homotrimer. It depends on Cu(2+) as a cofactor. The cofactor is Cu(+). FAD serves as cofactor. Post-translationally, predicted to be exported by the Tat system. The position of the signal peptide cleavage has not been experimentally proven.

The protein resides in the periplasm. The catalysed reaction is nitric oxide + Fe(III)-[cytochrome c] + H2O = Fe(II)-[cytochrome c] + nitrite + 2 H(+). It participates in nitrogen metabolism; nitrate reduction (denitrification); dinitrogen from nitrate: step 2/4. The protein is Copper-containing nitrite reductase (nirK) of Cereibacter sphaeroides (strain ATCC 17025 / ATH 2.4.3) (Rhodobacter sphaeroides).